We begin with the raw amino-acid sequence, 473 residues long: Photosystem II CP43 reaction center protein (473 aa).

Positions 1–14 (MKTLYSLRRFSHVE) are excised as a propeptide. T15 carries the post-translational modification N-acetylthreonine. T15 is modified (phosphothreonine). The next 5 helical transmembrane spans lie at 69 to 93 (LFEV…PHLA), 134 to 155 (LLGP…KDRN), 178 to 200 (KALY…RKIT), 255 to 275 (KPFA…LSYS), and 291 to 312 (WFNN…ASQA). Residue E367 coordinates [CaMn4O5] cluster. The helical transmembrane segment at 447-471 (RARAAAAGFEKGIDRDFEPVLSMTP) threads the bilayer.

The protein belongs to the PsbB/PsbC family. PsbC subfamily. As to quaternary structure, PSII is composed of 1 copy each of membrane proteins PsbA, PsbB, PsbC, PsbD, PsbE, PsbF, PsbH, PsbI, PsbJ, PsbK, PsbL, PsbM, PsbT, PsbX, PsbY, PsbZ, Psb30/Ycf12, at least 3 peripheral proteins of the oxygen-evolving complex and a large number of cofactors. It forms dimeric complexes. Requires Binds multiple chlorophylls and provides some of the ligands for the Ca-4Mn-5O cluster of the oxygen-evolving complex. It may also provide a ligand for a Cl- that is required for oxygen evolution. PSII binds additional chlorophylls, carotenoids and specific lipids. as cofactor.

It localises to the plastid membrane. One of the components of the core complex of photosystem II (PSII). It binds chlorophyll and helps catalyze the primary light-induced photochemical processes of PSII. PSII is a light-driven water:plastoquinone oxidoreductase, using light energy to abstract electrons from H(2)O, generating O(2) and a proton gradient subsequently used for ATP formation. The protein is Photosystem II CP43 reaction center protein of Cuscuta gronovii (Common dodder).